The primary structure comprises 341 residues: tRNA N6-adenosine threonylcarbamoyltransferase (341 aa).

Fe cation contacts are provided by H110 and H114. Substrate-binding positions include 133–137 (LVSGG), D166, G179, and N276. D304 serves as a coordination point for Fe cation.

The protein belongs to the KAE1 / TsaD family. Requires Fe(2+) as cofactor.

It is found in the cytoplasm. It carries out the reaction L-threonylcarbamoyladenylate + adenosine(37) in tRNA = N(6)-L-threonylcarbamoyladenosine(37) in tRNA + AMP + H(+). Required for the formation of a threonylcarbamoyl group on adenosine at position 37 (t(6)A37) in tRNAs that read codons beginning with adenine. Is involved in the transfer of the threonylcarbamoyl moiety of threonylcarbamoyl-AMP (TC-AMP) to the N6 group of A37, together with TsaE and TsaB. TsaD likely plays a direct catalytic role in this reaction. The polypeptide is tRNA N6-adenosine threonylcarbamoyltransferase (Saccharophagus degradans (strain 2-40 / ATCC 43961 / DSM 17024)).